We begin with the raw amino-acid sequence, 257 residues long: Probable enoyl-CoA hydratase echA8 (257 aa).

It belongs to the enoyl-CoA hydratase/isomerase family.

The enzyme catalyses a (3S)-3-hydroxyacyl-CoA = a (2E)-enoyl-CoA + H2O. The catalysed reaction is a 4-saturated-(3S)-3-hydroxyacyl-CoA = a (3E)-enoyl-CoA + H2O. Functionally, could possibly oxidize fatty acids using specific components. The polypeptide is Probable enoyl-CoA hydratase echA8 (echA8) (Mycobacterium tuberculosis (strain CDC 1551 / Oshkosh)).